Here is a 99-residue protein sequence, read N- to C-terminus: Nucleoid-associated protein str1598 (99 aa).

The protein belongs to the YbaB/EbfC family. As to quaternary structure, homodimer.

The protein resides in the cytoplasm. It is found in the nucleoid. Binds to DNA and alters its conformation. May be involved in regulation of gene expression, nucleoid organization and DNA protection. The chain is Nucleoid-associated protein str1598 from Streptococcus thermophilus (strain CNRZ 1066).